The sequence spans 587 residues: Trihelix transcription factor GTL1 (587 aa).

Gly residues-rich tracts occupy residues 1-10 and 41-54; these read MEQGGGGGGN and GGLGGGGGGGGGGS. The disordered stretch occupies residues 1–63; that stretch reads MEQGGGGGGN…SASSSSGNRW (63 aa). One can recognise a Myb-like 1 domain in the interval 55 to 119; it reads ASSSSGNRWP…KCKEKFENVQ (65 aa). Residues 96–103 carry the Nuclear localization signal 1 motif; it reads SRKLLELG. Low complexity predominate over residues 173-194; sequence SSSPFPVFSQPQPQTQTQPPQT. The tract at residues 173–264 is disordered; it reads SSSPFPVFSQ…RKRGNRGGGG (92 aa). Pro residues predominate over residues 201-210; that stretch reads PTPPPLPLPS. Over residues 221–232 the composition is skewed to low complexity; that stretch reads SSHSSSTASGMG. Residues 233–242 are compositionally biased toward acidic residues; that stretch reads SDDDDDDMDV. The stretch at 285 to 328 forms a coiled coil; it reads QRSFLEALEKREQERLDREEAWKRQEMARLAREHEVMSQERAAS. The tract at residues 348–435 is disordered; sequence QLPPSLSSQP…EQSSLPSSSR (88 aa). Residues 356-366 are compositionally biased toward pro residues; it reads QPPPPYQPPPA. Low complexity-rich tracts occupy residues 379–395 and 411–434; these read AQSQSQQPIMAIPQQQI and QKQQQQPQQEMVMSSEQSSLPSSS. The region spanning 434–492 is the Myb-like 2 domain; the sequence is SRWPKAEILALINLRSGMEPRYQDNVPKGLLWEEISTSMKRMGYNRNAKRCKEKWENIN. The short motif at 472–479 is the Nuclear localization signal 2 element; the sequence is MKRMGYNR. Residues 530-587 form a disordered region; it reads GGGSSTSGLPQDQKQSPVTAMKPPQEGLVNVQQTHGSASTEEEEPIEESPQGTEKKTL. 2 stretches are compositionally biased toward polar residues: residues 538 to 547 and 559 to 568; these read LPQDQKQSPV and NVQQTHGSAS.

As to expression, mostly expressed in siliques, and, to a lower extent, in growing root hairs, leaves, stems, and flowers. Present in abaxial epidermal cells, predominantly in guard cells, pavement cells, and meristemoids.

The protein resides in the nucleus. Transcription repressor that binds specific DNA sequence such as GT3 box 5'-GGTAAA-3' in the SDD1 promoter. Negative regulator of water use efficiency (WUE) via the promotion of stomatal density and distribution by the transcription repression of SDD1. Regulates the expression of several cell cycle genes and endoreduplication, especially in trichomes where it prevents ploidy-dependent plant cell growth. Regulates negatively root hair growth by directly binding RSL4 promoter and repressing RSL4 expression. The polypeptide is Trihelix transcription factor GTL1 (Arabidopsis thaliana (Mouse-ear cress)).